Consider the following 102-residue polypeptide: Small ribosomal subunit protein eS24 (102 aa).

It belongs to the eukaryotic ribosomal protein eS24 family.

This chain is Small ribosomal subunit protein eS24, found in Methanococcus aeolicus (strain ATCC BAA-1280 / DSM 17508 / OCM 812 / Nankai-3).